We begin with the raw amino-acid sequence, 341 residues long: S-adenosylmethionine:tRNA ribosyltransferase-isomerase (341 aa).

The protein belongs to the QueA family. In terms of assembly, monomer.

It localises to the cytoplasm. The enzyme catalyses 7-aminomethyl-7-carbaguanosine(34) in tRNA + S-adenosyl-L-methionine = epoxyqueuosine(34) in tRNA + adenine + L-methionine + 2 H(+). Its pathway is tRNA modification; tRNA-queuosine biosynthesis. In terms of biological role, transfers and isomerizes the ribose moiety from AdoMet to the 7-aminomethyl group of 7-deazaguanine (preQ1-tRNA) to give epoxyqueuosine (oQ-tRNA). The protein is S-adenosylmethionine:tRNA ribosyltransferase-isomerase of Halothermothrix orenii (strain H 168 / OCM 544 / DSM 9562).